Consider the following 408-residue polypeptide: Phosphoglycerate kinase (408 aa).

Substrate-binding positions include 24-26, arginine 40, 63-66, arginine 122, and arginine 166; these read DLN and HLGR. Residues lysine 216, glycine 304, glutamate 335, and 364–367 contribute to the ATP site; that span reads GGDS.

The protein belongs to the phosphoglycerate kinase family. In terms of assembly, monomer.

The protein localises to the cytoplasm. It carries out the reaction (2R)-3-phosphoglycerate + ATP = (2R)-3-phospho-glyceroyl phosphate + ADP. The protein operates within carbohydrate degradation; glycolysis; pyruvate from D-glyceraldehyde 3-phosphate: step 2/5. In Mycolicibacterium smegmatis (strain ATCC 700084 / mc(2)155) (Mycobacterium smegmatis), this protein is Phosphoglycerate kinase.